Reading from the N-terminus, the 201-residue chain is Large ribosomal subunit protein uL4 (201 aa).

Positions 44–71 (RAQKTRAEVTGSGKKPWRQKGTGRARSG) are disordered.

This sequence belongs to the universal ribosomal protein uL4 family. As to quaternary structure, part of the 50S ribosomal subunit.

Its function is as follows. One of the primary rRNA binding proteins, this protein initially binds near the 5'-end of the 23S rRNA. It is important during the early stages of 50S assembly. It makes multiple contacts with different domains of the 23S rRNA in the assembled 50S subunit and ribosome. In terms of biological role, forms part of the polypeptide exit tunnel. This chain is Large ribosomal subunit protein uL4, found in Pectobacterium carotovorum subsp. carotovorum (strain PC1).